A 121-amino-acid chain; its full sequence is Large ribosomal subunit protein bL12 (121 aa).

This sequence belongs to the bacterial ribosomal protein bL12 family. As to quaternary structure, homodimer. Part of the ribosomal stalk of the 50S ribosomal subunit. Forms a multimeric L10(L12)X complex, where L10 forms an elongated spine to which 2 to 4 L12 dimers bind in a sequential fashion. Binds GTP-bound translation factors.

Forms part of the ribosomal stalk which helps the ribosome interact with GTP-bound translation factors. Is thus essential for accurate translation. The polypeptide is Large ribosomal subunit protein bL12 (Alkaliphilus oremlandii (strain OhILAs) (Clostridium oremlandii (strain OhILAs))).